The chain runs to 501 residues: Endosomal/lysosomal proton channel TMEM175 (501 aa).

Residues 1 to 20 form a disordered region; that stretch reads MAAPRAATPGPGGGARKPEL. Over 1-31 the chain is Cytoplasmic; it reads MAAPRAATPGPGGGARKPELDLELGSSTQTS. The chain crosses the membrane as a helical span at residues 32 to 54; it reads HRLLAYSDALLSIIATVMILPVA. The RxxxFSD motif 1 motif lies at 33 to 39; that stretch reads RLLAYSD. The Lumenal portion of the chain corresponds to 55–75; the sequence is HTKIHPDQKLGESVQQLLLTK. The short helix H1-1 stretch occupies residues 56–61; the sequence is TKIHPD. Residues 63 to 69 form a short helix H2-1 region; it reads KLGESVQ. Residues 76–98 traverse the membrane as a helical segment; the sequence is IAVYLMTFLIVTVAWAAHVRLFQ. Topologically, residues 99 to 104 are cytoplasmic; the sequence is VIELID. A helical transmembrane segment spans residues 105–126; sequence DVLALLNLACMMIITFLPYTFS. Residues 127 to 136 are Lumenal-facing; that stretch reads LMASFPGVPF. The helical transmembrane segment at 137–158 threads the bilayer; it reads GIFLFSVCAVVIGLIQAVIVVY. Topologically, residues 159–182 are cytoplasmic; sequence GFYHPHLLNQQIQVSENQNFYKRH. A helical membrane pass occupies residues 183–203; it reads ILKIILRGPALCFLAAIFSFF. Over 204-208 the chain is Lumenal; that stretch reads FIPLS. The helical transmembrane segment at 209–228 threads the bilayer; sequence YLLLGLVIVFPHLSRFITWC. At 229 to 257 the chain is on the cytoplasmic side; sequence KTKIVGHRDEEEASYSLETFSFYLSEPLS. A helical transmembrane segment spans residues 258 to 282; it reads KERVEAFSDGVYAIVATLLILDICE. The RxxxFSD motif 2 signature appears at 260–266; the sequence is RVEAFSD. At 283–309 the chain is on the lumenal side; that stretch reads DNVPDPREVGEKFHGSLLEALSEYGPN. Residues 288-296 are short helix H1-2; the sequence is PREVGEKFH. Residues 298–304 are short helix H2-2; the sequence is SLLEALS. Residues 310 to 332 form a helical membrane-spanning segment; it reads YLAYFGSFVTIGLLWFVHHSLFL. At 333-338 the chain is on the cytoplasmic side; that stretch reads YVTKAT. A helical transmembrane segment spans residues 339-360; it reads RLMGLLNILSLAFIGGLPLAYQ. Over 361 to 375 the chain is Lumenal; sequence LTSEFAEKSHNEIEA. Residues 376–396 traverse the membrane as a helical segment; it reads IQVSCVITFFASIFQFAIWTT. The Cytoplasmic portion of the chain corresponds to 397 to 416; that stretch reads ALLHERETLHPFARYGGKEH. A helical membrane pass occupies residues 417-440; it reads AFMFAKLALYPCVSLGAFFLTCLL. Topologically, residues 441 to 442 are lumenal; it reads SE. Residues 443–469 traverse the membrane as a helical segment; sequence FSTEIFHLMQIVIPFAFLALRIFVRIS. Over 470 to 501 the chain is Cytoplasmic; it reads LTVIKSVMSLSRRKVVLLEEEEACLSPTETHS.

It belongs to the TMEM175 family. As to quaternary structure, homodimer.

The protein localises to the endosome membrane. Its subcellular location is the lysosome membrane. It catalyses the reaction H(+)(in) = H(+)(out). It carries out the reaction K(+)(in) = K(+)(out). Active at low pH (under pH 4.6): proton channel activity is activated by luminal side protons. Polyunsaturated fatty acids, such as arachidonic acid, also activate the channel activity. Functionally, proton-activated proton channel that catalyzes proton efflux from endosomes and lysosomes to maintain a steady-state pH. Activated at low pH (under pH 4.6) by luminal side protons: selectively mediates lysosomal proton release from lysosomes, eliciting a proton leak that balances V-ATPase activity to maintain pH homeostasis. Regulation of lumenal pH stability is required for autophagosome-lysosome fusion. Also acts as a potassium channel at higher pH, regulating potassium conductance in endosomes and lysosomes. In Gallus gallus (Chicken), this protein is Endosomal/lysosomal proton channel TMEM175.